A 254-amino-acid chain; its full sequence is Proteasome subunit alpha type-4 (254 aa).

A Phosphothreonine modification is found at Thr60. The segment at 235-254 (QIEQEKQEQQEQDKKKKSNH) is disordered. Residues 237 to 248 (EQEKQEQQEQDK) are compositionally biased toward basic and acidic residues.

It belongs to the peptidase T1A family. As to quaternary structure, the 26S proteasome consists of a 20S proteasome core and two 19S regulatory subunits. The 20S proteasome core is composed of 28 subunits that are arranged in four stacked rings, resulting in a barrel-shaped structure. The two end rings are each formed by seven alpha subunits, and the two central rings are each formed by seven beta subunits. The catalytic chamber with the active sites is on the inside of the barrel. Interacts with CIC1.

The protein resides in the cytoplasm. The protein localises to the nucleus. Its function is as follows. The proteasome degrades poly-ubiquitinated proteins in the cytoplasm and in the nucleus. It is essential for the regulated turnover of proteins and for the removal of misfolded proteins. The proteasome is a multicatalytic proteinase complex that is characterized by its ability to cleave peptides with Arg, Phe, Tyr, Leu, and Glu adjacent to the leaving group at neutral or slightly basic pH. It has an ATP-dependent proteolytic activity. This Saccharomyces cerevisiae (strain ATCC 204508 / S288c) (Baker's yeast) protein is Proteasome subunit alpha type-4 (PRE6).